Consider the following 199-residue polypeptide: Imidazole glycerol phosphate synthase subunit HisH (199 aa).

Residues 1 to 199 (MTVVVDYEMG…QILKNLREML (199 aa)) enclose the Glutamine amidotransferase type-1 domain. Cysteine 79 (nucleophile) is an active-site residue. Active-site residues include histidine 180 and glutamate 182.

In terms of assembly, heterodimer of HisH and HisF.

Its subcellular location is the cytoplasm. The enzyme catalyses 5-[(5-phospho-1-deoxy-D-ribulos-1-ylimino)methylamino]-1-(5-phospho-beta-D-ribosyl)imidazole-4-carboxamide + L-glutamine = D-erythro-1-(imidazol-4-yl)glycerol 3-phosphate + 5-amino-1-(5-phospho-beta-D-ribosyl)imidazole-4-carboxamide + L-glutamate + H(+). It carries out the reaction L-glutamine + H2O = L-glutamate + NH4(+). It functions in the pathway amino-acid biosynthesis; L-histidine biosynthesis; L-histidine from 5-phospho-alpha-D-ribose 1-diphosphate: step 5/9. In terms of biological role, IGPS catalyzes the conversion of PRFAR and glutamine to IGP, AICAR and glutamate. The HisH subunit catalyzes the hydrolysis of glutamine to glutamate and ammonia as part of the synthesis of IGP and AICAR. The resulting ammonia molecule is channeled to the active site of HisF. The sequence is that of Imidazole glycerol phosphate synthase subunit HisH from Carboxydothermus hydrogenoformans (strain ATCC BAA-161 / DSM 6008 / Z-2901).